A 357-amino-acid polypeptide reads, in one-letter code: Probable cinnamyl alcohol dehydrogenase 1 (357 aa).

Position 47 (cysteine 47) interacts with Zn(2+). Threonine 49 contacts NADP(+). Zn(2+)-binding residues include histidine 69, glutamate 70, cysteine 100, cysteine 103, cysteine 106, cysteine 114, and cysteine 163. Residues threonine 167, 188–193 (GLGGVG), 211–216 (SSSNKK), threonine 251, glycine 275, and 298–300 (SFI) each bind NADP(+).

It belongs to the zinc-containing alcohol dehydrogenase family. Homodimer. Zn(2+) serves as cofactor. Post-translationally, the N-terminus is blocked.

It carries out the reaction (E)-cinnamyl alcohol + NADP(+) = (E)-cinnamaldehyde + NADPH + H(+). The enzyme catalyses (E)-coniferol + NADP(+) = (E)-coniferaldehyde + NADPH + H(+). The catalysed reaction is (E)-sinapyl alcohol + NADP(+) = (E)-sinapaldehyde + NADPH + H(+). It catalyses the reaction (E)-4-coumaroyl alcohol + NADP(+) = (E)-4-coumaraldehyde + NADPH + H(+). It carries out the reaction (E)-caffeyl alcohol + NADP(+) = (E)-caffeyl aldehyde + NADPH + H(+). It functions in the pathway aromatic compound metabolism; phenylpropanoid biosynthesis. Its function is as follows. Involved in lignin biosynthesis. Catalyzes the final step specific for the production of lignin monomers. Catalyzes the NADPH-dependent reduction of coniferaldehyde, 5-hydroxyconiferaldehyde, sinapaldehyde, 4-coumaraldehyde and caffeyl aldehyde to their respective alcohols. In Nicotiana tabacum (Common tobacco), this protein is Probable cinnamyl alcohol dehydrogenase 1.